Here is a 216-residue protein sequence, read N- to C-terminus: Octanoyltransferase (216 aa).

Positions 35-213 (NSNPDFIWIG…IIQEEFNFDF (179 aa)) constitute a BPL/LPL catalytic domain. Residues 77 to 84 (RGGEVTCH), 144 to 146 (SIG), and 157 to 159 (GFS) each bind substrate. Residue Cys175 is the Acyl-thioester intermediate of the active site.

This sequence belongs to the LipB family.

It is found in the cytoplasm. It catalyses the reaction octanoyl-[ACP] + L-lysyl-[protein] = N(6)-octanoyl-L-lysyl-[protein] + holo-[ACP] + H(+). It participates in protein modification; protein lipoylation via endogenous pathway; protein N(6)-(lipoyl)lysine from octanoyl-[acyl-carrier-protein]: step 1/2. In terms of biological role, catalyzes the transfer of endogenously produced octanoic acid from octanoyl-acyl-carrier-protein onto the lipoyl domains of lipoate-dependent enzymes. Lipoyl-ACP can also act as a substrate although octanoyl-ACP is likely to be the physiological substrate. In Prochlorococcus marinus (strain MIT 9215), this protein is Octanoyltransferase.